The chain runs to 560 residues: Putative transport protein ESA_02488 (560 aa).

5 helical membrane-spanning segments follow: residues 8–28 (LLNGNYILLLFVVLALGLCLG), 32–52 (LGSVQLGNSIGVLVVSLLLGQ), 66–86 (FMLFIFCVGVEAGPNFFSIFF), 91–111 (NYLMLALVMVGSALLIALGLG), and 158–178 (HLSLGYALTYLIGLVSLIFGA). 2 consecutive RCK C-terminal domains span residues 200-288 (RGLD…SFRN) and 292-373 (VFDR…RIGF). Helical transmembrane passes span 383–403 (LLAFCAFFIVGLMIGMITFQF), 406–426 (FSFGIGNAAGLLFAGIMLGFL), 447–467 (FGLMVFMAGVGLSAGSGIGHG), 475–495 (MLFAGLIVSLLPVVICFLFGA), and 539–559 (YAIANVLLTLAGTLIVIIWPG).

Belongs to the AAE transporter (TC 2.A.81) family. YbjL subfamily.

It is found in the cell membrane. In Cronobacter sakazakii (strain ATCC BAA-894) (Enterobacter sakazakii), this protein is Putative transport protein ESA_02488.